We begin with the raw amino-acid sequence, 27 residues long: Trypsin inhibitor 5 (27 aa).

Cystine bridges form between Cys1–Cys18, Cys8–Cys20, and Cys14–Cys26.

The protein resides in the secreted. Its function is as follows. Inhibits trypsin. This Sechium edule (Chayote) protein is Trypsin inhibitor 5.